Reading from the N-terminus, the 355-residue chain is IGF-like family receptor 1 (355 aa).

A signal peptide spans 1–22 (MGPGRCLLTALLLLALAPPPEA). Topologically, residues 23 to 163 (SQYCGRLEYW…PQQAWPNFLP (141 aa)) are extracellular. The interval 120–147 (KGHCPLTPGNPGAPSSQERSSPASSIAW) is disordered. The span at 132-144 (APSSQERSSPASS) shows a compositional bias: low complexity. A helical transmembrane segment spans residues 164 to 184 (LVVLVLLLTLAVIAILLFILL). Residues 185-355 (WHLCWPKEKA…KLGSSGVCWA (171 aa)) lie on the Cytoplasmic side of the membrane.

The protein resides in the cell membrane. In terms of biological role, probable cell membrane receptor for the IGF-like family proteins. Binds IGFL1 and IGFL3 with a higher affinity. May also bind IGFL2. In Homo sapiens (Human), this protein is IGF-like family receptor 1 (IGFLR1).